The chain runs to 391 residues: Choline/ethanolaminephosphotransferase 1 (391 aa).

The Lumenal portion of the chain corresponds to 1-49 (MGYFVPDSHIENLKSYKYQSEDRSLVSKYFLKPFWQRFCHIFPTWMAPN). A helical membrane pass occupies residues 50–69 (IITLSGFAFIVINVLTVFYY). The Cytoplasmic segment spans residues 70-172 (DPNLNTDTPR…YHTHTLYLSE (103 aa)). A helical membrane pass occupies residues 173 to 193 (FSGPVEGILIVCVSLILTGIY). Residues 194 to 211 (GKQVIWHTYLFTITVGDK) are Lumenal-facing. A helical transmembrane segment spans residues 212–232 (VIDVDTLDIVFSLAVFGLVMN). Over 233 to 264 (ALSAKRNVDKYYRNSTSSANNITQIEQDSAIK) the chain is Cytoplasmic. A helical membrane pass occupies residues 265–282 (GLLPFFAYYASIALLVWM). The Lumenal segment spans residues 283 to 285 (QPS). A helical membrane pass occupies residues 286 to 308 (FITLSFILSVGFTGAFTVGRIIV). The Cytoplasmic segment spans residues 309 to 321 (CHLTKQSFPMFNA). A helical membrane pass occupies residues 322–342 (PMLIPLCQIVLYKICLSLWGI). At 343–346 (ESNK) the chain is on the lumenal side. Residues 347-367 (IVFALSWLGFGLSLGVHIMFM) traverse the membrane as a helical segment. Residues 368–391 (NDIIHEFTEYLDVYALSIKRSKLT) are Cytoplasmic-facing.

Belongs to the CDP-alcohol phosphatidyltransferase class-I family. The cofactor is Mg(2+).

It localises to the golgi apparatus membrane. It catalyses the reaction CDP-ethanolamine + a 1,2-diacyl-sn-glycerol = a 1,2-diacyl-sn-glycero-3-phosphoethanolamine + CMP + H(+). The catalysed reaction is CDP-choline + a 1,2-diacyl-sn-glycerol = a 1,2-diacyl-sn-glycero-3-phosphocholine + CMP + H(+). The enzyme catalyses CDP-N-methylethanolamine + a 1,2-diacyl-sn-glycerol = a 1,2-diacyl-sn-glycero-3-phospho-N-methylethanolamine + CMP + H(+). It carries out the reaction CDP-N,N-dimethylethanolamine + a 1,2-diacyl-sn-glycerol = a 1,2-diacyl-sn-glycero-3-phospho-N,N-dimethylethanolamine + CMP + H(+). It catalyses the reaction 1,2-di-(9Z-octadecenoyl)-glycerol + CDP-choline = 1,2-di-(9Z-octadecenoyl)-sn-glycero-3-phosphocholine + CMP + H(+). The catalysed reaction is 1,2-di-(9Z-octadecenoyl)-glycerol + CDP-ethanolamine = 1,2-di-(9Z-octadecenoyl)-sn-glycero-3-phosphoethanolamine + CMP + H(+). Its pathway is phospholipid metabolism; phosphatidylethanolamine biosynthesis; phosphatidylethanolamine from ethanolamine: step 3/3. It functions in the pathway phospholipid metabolism; phosphatidylcholine biosynthesis; phosphatidylcholine from phosphocholine: step 2/2. With respect to regulation, requires a divalent cation activator, and is inhibited by CMP. Activated by phospholipids, especially phosphatidylcholine. In terms of biological role, catalyzes the final step in the CDP-ethanolamine route leading to phosphatidylethanolamine (PE). Can also catalyze the formation of phosphatidylcholine (PC) from CDP-choline, but does not substantially contribute to PC biosynthesis. Preferentially uses CDP-dimethylethanolamine and CDP-propanolamine as aminoalcohol substrates. Shows highest activity toward di-unsaturated diacylglycerol species as lipid substrates. The CDP-ethanolamine pathway may play a role in maintaining the proper PE species distribution. The chain is Choline/ethanolaminephosphotransferase 1 (EPT1) from Saccharomyces cerevisiae (strain ATCC 204508 / S288c) (Baker's yeast).